Consider the following 148-residue polypeptide: C-C motif chemokine 2 (148 aa).

The N-terminal stretch at 1–23 (MQVPVMLLGLLFTVAGWSIHVLA) is a signal peptide. Q24 carries the post-translational modification Pyrrolidone carboxylic acid. Disulfide bonds link C34–C59 and C35–C75. A glycan (N-linked (GlcNAc...) asparagine) is linked at N126.

It belongs to the intercrine beta (chemokine CC) family. Monomer or homodimer; in equilibrium. Is tethered on endothelial cells by glycosaminoglycan (GAG) side chains of proteoglycans. Interacts with TNFAIP6 (via Link domain). Processing at the N-terminus can regulate receptor and target cell selectivity. Deletion of the N-terminal residue converts it from an activator of basophil to an eosinophil chemoattractant. Post-translationally, N-Glycosylated.

It localises to the secreted. Its function is as follows. Acts as a ligand for C-C chemokine receptor CCR2. Signals through binding and activation of CCR2 and induces a strong chemotactic response and mobilization of intracellular calcium ions. Exhibits a chemotactic activity for monocytes and basophils but not neutrophils or eosinophils. Plays an important role in mediating peripheral nerve injury-induced neuropathic pain. Increases NMDA-mediated synaptic transmission in both dopamine D1 and D2 receptor-containing neurons, which may be caused by MAPK/ERK-dependent phosphorylation of GRIN2B/NMDAR2B. The protein is C-C motif chemokine 2 (Ccl2) of Mus musculus (Mouse).